We begin with the raw amino-acid sequence, 370 residues long: Cytochrome b (370 aa).

4 helical membrane-spanning segments follow: residues 25-45, 69-90, 105-125, and 170-190; these read FGSM…FLAV, WMMQ…YIHI, WLSG…GYVL, and FFAL…LHIL. H75 and H89 together coordinate heme b. H174 and H188 together coordinate heme b. H193 provides a ligand contact to a ubiquinone. 4 helical membrane passes run 218–238, 280–300, 312–332, and 339–358; these read YKDM…VSFF, LGGA…PFTH, FMQL…WTAT, and FTTI…ISNP.

It belongs to the cytochrome b family. As to quaternary structure, the cytochrome bc1 complex contains 3 respiratory subunits (MT-CYB, CYC1 and UQCRFS1), 2 core proteins (UQCRC1 and UQCRC2) and probably 6 low-molecular weight proteins. It depends on heme b as a cofactor.

Its subcellular location is the mitochondrion inner membrane. Component of the ubiquinol-cytochrome c reductase complex (complex III or cytochrome b-c1 complex) that is part of the mitochondrial respiratory chain. The b-c1 complex mediates electron transfer from ubiquinol to cytochrome c. Contributes to the generation of a proton gradient across the mitochondrial membrane that is then used for ATP synthesis. The protein is Cytochrome b (MT-CYB) of Chilabothrus strigilatus fosteri (Bimini Island boa constrictor).